A 33-amino-acid polypeptide reads, in one-letter code: MLFTLGWASLAAMFSFSIAMVVWGRNGDGTLNF.

The helical transmembrane segment at 2 to 22 (LFTLGWASLAAMFSFSIAMVV) threads the bilayer.

It belongs to the PetN family. In terms of assembly, the 4 large subunits of the cytochrome b6-f complex are cytochrome b6, subunit IV (17 kDa polypeptide, PetD), cytochrome f and the Rieske protein, while the 4 small subunits are PetG, PetL, PetM and PetN. The complex functions as a dimer.

It is found in the cellular thylakoid membrane. In terms of biological role, component of the cytochrome b6-f complex, which mediates electron transfer between photosystem II (PSII) and photosystem I (PSI), cyclic electron flow around PSI, and state transitions. This is Cytochrome b6-f complex subunit 8 from Synechococcus sp. (strain CC9605).